A 914-amino-acid chain; its full sequence is Chitin synthase B (914 aa).

2 disordered regions span residues methionine 1 to tyrosine 67 and tyrosine 112 to leucine 140. Residues glycine 130–leucine 140 are compositionally biased toward gly residues. 7 consecutive transmembrane segments (helical) span residues tryptophan 543–tyrosine 562, isoleucine 586–valine 606, isoleucine 627–alanine 647, serine 662–valine 682, alanine 712–methionine 732, leucine 843–valine 863, and alanine 882–leucine 902.

This sequence belongs to the chitin synthase family. Class III subfamily.

Its subcellular location is the cell membrane. It carries out the reaction [(1-&gt;4)-N-acetyl-beta-D-glucosaminyl](n) + UDP-N-acetyl-alpha-D-glucosamine = [(1-&gt;4)-N-acetyl-beta-D-glucosaminyl](n+1) + UDP + H(+). Polymerizes chitin, a structural polymer of the cell wall and septum, by transferring the sugar moiety of UDP-GlcNAc to the non-reducing end of the growing chitin polymer. Plays an important role in septal growth or maintenance. Mediates colony spore formation. The chain is Chitin synthase B from Aspergillus niger (strain ATCC MYA-4892 / CBS 513.88 / FGSC A1513).